Here is a 190-residue protein sequence, read N- to C-terminus: Peptidyl-prolyl cis-trans isomerase A (190 aa).

Residues 1 to 24 (MLKSTLAAVAAVFALSALSPAALA) form the signal peptide. The PPIase cyclophilin-type domain maps to 27-188 (GDPHVLLTTS…KPVVILSAKV (162 aa)).

It belongs to the cyclophilin-type PPIase family.

It is found in the periplasm. The enzyme catalyses [protein]-peptidylproline (omega=180) = [protein]-peptidylproline (omega=0). Functionally, PPIases accelerate the folding of proteins. It catalyzes the cis-trans isomerization of proline imidic peptide bonds in oligopeptides. In Salmonella typhimurium (strain LT2 / SGSC1412 / ATCC 700720), this protein is Peptidyl-prolyl cis-trans isomerase A (ppiA).